The following is a 329-amino-acid chain: DNA-directed RNA polymerase subunit alpha (329 aa).

Positions 1–234 are alpha N-terminal domain (alpha-NTD); that stretch reads MQGSVTEFLK…EQLDAFVELR (234 aa). Positions 248-329 are alpha C-terminal domain (alpha-CTD); it reads FDPILLRPVD…WPPASLADDL (82 aa).

It belongs to the RNA polymerase alpha chain family. Homodimer. The RNAP catalytic core consists of 2 alpha, 1 beta, 1 beta' and 1 omega subunit. When a sigma factor is associated with the core the holoenzyme is formed, which can initiate transcription.

The enzyme catalyses RNA(n) + a ribonucleoside 5'-triphosphate = RNA(n+1) + diphosphate. DNA-dependent RNA polymerase catalyzes the transcription of DNA into RNA using the four ribonucleoside triphosphates as substrates. The protein is DNA-directed RNA polymerase subunit alpha of Shewanella loihica (strain ATCC BAA-1088 / PV-4).